The following is a 574-amino-acid chain: Isocitrate dehydrogenase kinase/phosphatase (574 aa).

Residues 315 to 321 (APGIRGM) and Lys-336 each bind ATP. The active site involves Asp-371.

This sequence belongs to the AceK family.

Its subcellular location is the cytoplasm. It catalyses the reaction L-seryl-[isocitrate dehydrogenase] + ATP = O-phospho-L-seryl-[isocitrate dehydrogenase] + ADP + H(+). Bifunctional enzyme which can phosphorylate or dephosphorylate isocitrate dehydrogenase (IDH) on a specific serine residue. This is a regulatory mechanism which enables bacteria to bypass the Krebs cycle via the glyoxylate shunt in response to the source of carbon. When bacteria are grown on glucose, IDH is fully active and unphosphorylated, but when grown on acetate or ethanol, the activity of IDH declines drastically concomitant with its phosphorylation. This is Isocitrate dehydrogenase kinase/phosphatase from Escherichia coli (strain SMS-3-5 / SECEC).